A 322-amino-acid chain; its full sequence is NADH-quinone oxidoreductase subunit H (322 aa).

8 helical membrane passes run 14-34, 81-101, 114-134, 149-169, 186-206, 237-257, 265-285, and 302-322; these read IFMH…YMSF, YIFV…IPVI, VGVL…LLAG, SIAQ…GIVA, LWNI…GMAL, FFIS…TLFF, FPPV…FVLI, and WKFL…YILI.

This sequence belongs to the complex I subunit 1 family. As to quaternary structure, NDH-1 is composed of 13 different subunits. Subunits NuoA, H, J, K, L, M, N constitute the membrane sector of the complex.

Its subcellular location is the cell inner membrane. The catalysed reaction is a quinone + NADH + 5 H(+)(in) = a quinol + NAD(+) + 4 H(+)(out). In terms of biological role, NDH-1 shuttles electrons from NADH, via FMN and iron-sulfur (Fe-S) centers, to quinones in the respiratory chain. The immediate electron acceptor for the enzyme in this species is believed to be ubiquinone. Couples the redox reaction to proton translocation (for every two electrons transferred, four hydrogen ions are translocated across the cytoplasmic membrane), and thus conserves the redox energy in a proton gradient. This subunit may bind ubiquinone. The polypeptide is NADH-quinone oxidoreductase subunit H (Blochmanniella floridana).